The following is a 233-amino-acid chain: Large ribosomal subunit protein uL1 (233 aa).

This sequence belongs to the universal ribosomal protein uL1 family. As to quaternary structure, part of the 50S ribosomal subunit.

Its function is as follows. Binds directly to 23S rRNA. The L1 stalk is quite mobile in the ribosome, and is involved in E site tRNA release. Functionally, protein L1 is also a translational repressor protein, it controls the translation of the L11 operon by binding to its mRNA. In Thermotoga petrophila (strain ATCC BAA-488 / DSM 13995 / JCM 10881 / RKU-1), this protein is Large ribosomal subunit protein uL1.